Here is a 125-residue protein sequence, read N- to C-terminus: uncharacterized protein (125 aa).

This is an uncharacterized protein from Aquifex aeolicus (strain VF5).